The sequence spans 437 residues: Perilipin-2 (437 aa).

Ala2 carries the post-translational modification N-acetylalanine. A Phosphoserine modification is found at Ser215. Phosphotyrosine is present on Tyr232. Residues 412 to 437 form a disordered region; sequence SQNAQDQGAEMDKSSQETQRSEHKTH. Over residues 421–437 the composition is skewed to basic and acidic residues; that stretch reads EMDKSSQETQRSEHKTH.

Belongs to the perilipin family. In terms of assembly, interacts with IRGC. Post-translationally, acylated; primarily with C14, C16 and C18 fatty acids. Phosphorylation at Tyr-232 by isoform 1 of CHKA (CHKalpha2) promotes dissociation from lipid droplets: dissociation is followed by recruitment of autophagosome machinery to lipid droplets and subsequent lipid droplet lipolysis. In terms of processing, polyubiquitination of Nt-acetylatable A-PLIN2 by MARCHF6 lead to degradation by 26S proteasomes. In terms of tissue distribution, milk lipid globules.

The protein localises to the membrane. Its subcellular location is the lipid droplet. In terms of biological role, structural component of lipid droplets, which is required for the formation and maintenance of lipid storage droplets. This is Perilipin-2 from Homo sapiens (Human).